Reading from the N-terminus, the 340-residue chain is Zinc finger protein 367 (340 aa).

The tract at residues 101–140 (GAPQSSASVAAVSGGEDEEEASSPDSGHLKDGIRRGRPRA) is disordered. The segment covering 127–140 (GHLKDGIRRGRPRA) has biased composition (basic and acidic residues). C2H2-type zinc fingers lie at residues 157-179 (IRCN…KRTH) and 185-209 (YLCD…QRLH). The segment at 280–317 (KGKLVQKADQEQQDPLEYLQSDEEDDEKSGAQRRLQEQ) is disordered. The stretch at 299–332 (QSDEEDDEKSGAQRRLQEQRERLHGALALIELAN) forms a coiled coil. Ser-300 carries the phosphoserine modification. Positions 307 to 317 (KSGAQRRLQEQ) are enriched in basic and acidic residues.

The protein belongs to the krueppel C2H2-type zinc-finger protein family. In terms of tissue distribution, expressed in bone marrow and ovary.

Its subcellular location is the nucleus. Transcriptional activator. Isoform 1 may be involved in transcriptional activation of erythroid genes. This chain is Zinc finger protein 367 (Znf367), found in Mus musculus (Mouse).